The primary structure comprises 291 residues: Prepilin leader peptidase/N-methyltransferase (291 aa).

Residues 14-34 (LYFSLVFLFSLMIGSFLNVVI) form a helical membrane-spanning segment. Residues Cys-75, Cys-78, Cys-100, and Cys-103 each coordinate Zn(2+). Helical transmembrane passes span 107–127 (ISARYPLVELLTALLSVVVAM), 131–151 (PGWGTLAALLLTWVLVALTFI), 162–182 (LTLPLLWGGLLFNLLGGYVPL), 186–206 (VIGAMAGYLVLWSLYWAFKLL), 232–252 (LPIVLLLSSLVGAIFGIGLIL), and 262–282 (IPFGPYLAIAGWIALLWGDSI).

This sequence belongs to the peptidase A24 family. The cofactor is Zn(2+).

It localises to the cell inner membrane. It catalyses the reaction Typically cleaves a -Gly-|-Phe- bond to release an N-terminal, basic peptide of 5-8 residues from type IV prepilin, and then N-methylates the new N-terminal amino group, the methyl donor being S-adenosyl-L-methionine.. Plays an essential role in type IV pili and type II pseudopili formation by proteolytically removing the leader sequence from substrate proteins and subsequently monomethylating the alpha-amino group of the newly exposed N-terminal phenylalanine. The polypeptide is Prepilin leader peptidase/N-methyltransferase (tapD) (Aeromonas salmonicida (strain A449)).